The sequence spans 290 residues: MTLPFRNDLLSSLLARCKTVPLSRFSQPLFWLLLLLLAHQCAGLTWRLLDLGSQQASQPWQPAMVASQGQGSARLDLSGISRLSLFGKAKQQAQAADAVAADAPKTQLNAQLNGVLASSDPAKSIAIIAHNGVQNSYGIGDFIDGTQAKIRQVFADRVIIERDGRDETLMLDGEEYGKPLPKPGNQDDKLSSVRSELLGNPGKITDYLNISPVRVDGRMVGYRLNPGSNPELFNQLGLVANDMAVSINGLDLRDNAQAMQAMQQVAGATEMTVTVERQGQLYDVYVGLSE.

The Cytoplasmic portion of the chain corresponds to 1-28; the sequence is MTLPFRNDLLSSLLARCKTVPLSRFSQP. Residues 29–46 form a helical membrane-spanning segment; the sequence is LFWLLLLLLAHQCAGLTW. The Periplasmic portion of the chain corresponds to 47–290; sequence RLLDLGSQQA…LYDVYVGLSE (244 aa).

It belongs to the GSP C family.

The protein resides in the cell inner membrane. Functionally, involved in a type II secretion system (T2SS, formerly general secretion pathway, GSP) for the export of proteins. This is Type II secretion system protein C (exeC) from Aeromonas hydrophila.